A 308-amino-acid polypeptide reads, in one-letter code: N-acetylmuramic acid 6-phosphate etherase (308 aa).

An SIS domain is found at 62–225 (TAARLRQGGR…STGVMVQLGK (164 aa)). The active-site Proton donor is Glu90. The active site involves Glu121.

Belongs to the GCKR-like family. MurNAc-6-P etherase subfamily. As to quaternary structure, homodimer.

The catalysed reaction is N-acetyl-D-muramate 6-phosphate + H2O = N-acetyl-D-glucosamine 6-phosphate + (R)-lactate. It functions in the pathway amino-sugar metabolism; N-acetylmuramate degradation. Its function is as follows. Specifically catalyzes the cleavage of the D-lactyl ether substituent of MurNAc 6-phosphate, producing GlcNAc 6-phosphate and D-lactate. The sequence is that of N-acetylmuramic acid 6-phosphate etherase from Thermosynechococcus vestitus (strain NIES-2133 / IAM M-273 / BP-1).